Reading from the N-terminus, the 492-residue chain is MSKNLTTRSEDYSKWYNELVVKADLAENSGVRGCMVIKPYGYAIWEKMQAELDRMFKETGHQNAYFPLFVPKSMFEAEEKNAEGFAKECAVVTHYRLKNDEDRPGKLMVDPNAKLEEELIVRPTSEAIIWSTYKGWVQSYRDLPLLINQWANVVRWEMRTRLFLRTAEFLWQEGHTAHATKDEAIEESEKMMNVYADFAENFMAIPVVKGFKTETERFAGADETYCIEALMQDGKALQAGTSHFLGQNFAKAFDVKFANAEGKQEHVWGTSWGVSTRLMGALIMTHSDDQGLVLPPNLAPIQVVIVPIHKTDEQLAQITAAVNELTAKLRKLKISVKYDDRTTQKPGFKFAEWELKGVPVRIAVGPKDLENGTFEVARRDNLSKEVVAAEKIVDHVNDLLEQIQKDLFDKALTYRNTHITEVNNFEEFKEVLEGKGGFISAHWDGTAATEEKIKDLTKATIRCIPLDAVEEAGTCVFTGEPSSKRVLFAKAY.

Belongs to the class-II aminoacyl-tRNA synthetase family. ProS type 3 subfamily. In terms of assembly, homodimer.

It is found in the cytoplasm. The catalysed reaction is tRNA(Pro) + L-proline + ATP = L-prolyl-tRNA(Pro) + AMP + diphosphate. Its function is as follows. Catalyzes the attachment of proline to tRNA(Pro) in a two-step reaction: proline is first activated by ATP to form Pro-AMP and then transferred to the acceptor end of tRNA(Pro). The protein is Proline--tRNA ligase of Flavobacterium johnsoniae (strain ATCC 17061 / DSM 2064 / JCM 8514 / BCRC 14874 / CCUG 350202 / NBRC 14942 / NCIMB 11054 / UW101) (Cytophaga johnsonae).